The following is a 307-amino-acid chain: Protoheme IX farnesyltransferase (307 aa).

9 consecutive transmembrane segments (helical) span residues 31-51 (VTQLAVFCAIIGMFLATPGMV), 53-73 (WPVLIGGAAGIWLLAGAAFAI), 103-123 (TLVFSAILGGAGMWLLHVYAN), 125-145 (LTMWLTFATFLGYAVVYTILL), 153-173 (IVIGGLSGAMPPALGWAAVAG), 179-199 (AWFLVLIIFTWTPPHFWALAL), 223-243 (LLHILLYTLIMIAATLLPFVY), 246-266 (SGYIYLAAALALGAGFLAYAW), and 285-305 (ILYLSLLFAALLVDHYFKFVP).

The protein belongs to the UbiA prenyltransferase family. Protoheme IX farnesyltransferase subfamily.

It is found in the cell inner membrane. It carries out the reaction heme b + (2E,6E)-farnesyl diphosphate + H2O = Fe(II)-heme o + diphosphate. The protein operates within porphyrin-containing compound metabolism; heme O biosynthesis; heme O from protoheme: step 1/1. Its function is as follows. Converts heme B (protoheme IX) to heme O by substitution of the vinyl group on carbon 2 of heme B porphyrin ring with a hydroxyethyl farnesyl side group. The polypeptide is Protoheme IX farnesyltransferase (Cupriavidus taiwanensis (strain DSM 17343 / BCRC 17206 / CCUG 44338 / CIP 107171 / LMG 19424 / R1) (Ralstonia taiwanensis (strain LMG 19424))).